The following is a 280-amino-acid chain: Undecaprenyl-diphosphatase (280 aa).

A run of 8 helical transmembrane segments spans residues 3–23 (IILL…EFLP), 45–65 (VDLF…YDYW), 88–108 (QLGL…FTFA), 115–135 (LFDP…IFYV), 150–170 (VGLK…IPGT), 191–211 (AEFS…LDLL), 225–245 (VLGI…RLLV), and 255–275 (IFAW…WGFG).

It belongs to the UppP family.

The protein localises to the cell inner membrane. The catalysed reaction is di-trans,octa-cis-undecaprenyl diphosphate + H2O = di-trans,octa-cis-undecaprenyl phosphate + phosphate + H(+). In terms of biological role, catalyzes the dephosphorylation of undecaprenyl diphosphate (UPP). Confers resistance to bacitracin. In Psychrobacter arcticus (strain DSM 17307 / VKM B-2377 / 273-4), this protein is Undecaprenyl-diphosphatase.